A 212-amino-acid polypeptide reads, in one-letter code: Probable GTP-binding protein EngB (212 aa).

The 191-residue stretch at G22 to I212 folds into the EngB-type G domain. GTP contacts are provided by residues G30–S37, G57–E61, D95–G98, T162–D165, and I192–A195. Residues S37 and T59 each coordinate Mg(2+).

The protein belongs to the TRAFAC class TrmE-Era-EngA-EngB-Septin-like GTPase superfamily. EngB GTPase family. Mg(2+) serves as cofactor.

Necessary for normal cell division and for the maintenance of normal septation. This is Probable GTP-binding protein EngB from Treponema denticola (strain ATCC 35405 / DSM 14222 / CIP 103919 / JCM 8153 / KCTC 15104).